The primary structure comprises 66 residues: DNA-directed RNA polymerase subunit Rpo10 (66 aa).

Zn(2+) contacts are provided by cysteine 7, cysteine 10, cysteine 44, and cysteine 45.

This sequence belongs to the archaeal Rpo10/eukaryotic RPB10 RNA polymerase subunit family. As to quaternary structure, part of the RNA polymerase complex. Zn(2+) is required as a cofactor.

Its subcellular location is the cytoplasm. The enzyme catalyses RNA(n) + a ribonucleoside 5'-triphosphate = RNA(n+1) + diphosphate. Its function is as follows. DNA-dependent RNA polymerase (RNAP) catalyzes the transcription of DNA into RNA using the four ribonucleoside triphosphates as substrates. The sequence is that of DNA-directed RNA polymerase subunit Rpo10 from Hyperthermus butylicus (strain DSM 5456 / JCM 9403 / PLM1-5).